A 591-amino-acid chain; its full sequence is 5'-nucleotidase domain-containing protein DDB_G0275467 (591 aa).

Low complexity-rich tracts occupy residues 38–50 (STTTTSGIKSYST) and 68–78 (QHQQQQPQQHQ). A disordered region spans residues 38–88 (STTTTSGIKSYSTHNRSNNDTHTSKSNTIDQHQQQQPQQHQNNDNKHLFTP). Residue Asp-165 is the Nucleophile of the active site. Positions 165 and 167 each coordinate Mg(2+). The Proton donor role is filled by Asp-167. 305-313 (TAAVGKVHL) contacts substrate. A Mg(2+)-binding site is contributed by Asp-450.

The protein belongs to the 5'(3')-deoxyribonucleotidase family. Mg(2+) is required as a cofactor.

The protein is 5'-nucleotidase domain-containing protein DDB_G0275467 of Dictyostelium discoideum (Social amoeba).